The chain runs to 22 residues: Chitin-binding protein 3 (22 aa).

Post-translationally, glycosylated; contains 2.5% carbohydrates.

Chitin-binding protein. Has antifungal activity against F.solani, F.oxysporum, C.musae and C.gloesporoides but not against P.oligandrum. Depending on concentration the antifungal activity can be fungistatic or fungicidal. Inhibits both spore germination and mycelial growth in F.solani at a concentration of 0.1 mg/ml. Has antifungal activity against C.krusei, C.albicans, C.tropicalis and C.parapsilosis. Has no chitinase, beta-glucanase or hemagglutinating activity. Acts as a flocculent. In Moringa oleifera (Horseradish tree), this protein is Chitin-binding protein 3.